The primary structure comprises 155 residues: S-ribosylhomocysteine lyase (155 aa).

3 residues coordinate Fe cation: His-53, His-57, and Cys-121.

It belongs to the LuxS family. As to quaternary structure, homodimer. Fe cation is required as a cofactor.

It carries out the reaction S-(5-deoxy-D-ribos-5-yl)-L-homocysteine = (S)-4,5-dihydroxypentane-2,3-dione + L-homocysteine. In terms of biological role, involved in the synthesis of autoinducer 2 (AI-2) which is secreted by bacteria and is used to communicate both the cell density and the metabolic potential of the environment. The regulation of gene expression in response to changes in cell density is called quorum sensing. Catalyzes the transformation of S-ribosylhomocysteine (RHC) to homocysteine (HC) and 4,5-dihydroxy-2,3-pentadione (DPD). The polypeptide is S-ribosylhomocysteine lyase (Thermus thermophilus (strain ATCC BAA-163 / DSM 7039 / HB27)).